Consider the following 372-residue polypeptide: Small ribosomal subunit protein mS77 (rPPR2) (372 aa).

A mitochondrion-targeting transit peptide spans 1–28 (MKSFLLSRQAIHRISLLSSKTPTFCRNF). Residues 240 to 265 (DNSIRESETVDGEVEEEGFVPSDEVE) form a disordered region. Over residues 248–257 (TVDGEVEEEG) the composition is skewed to acidic residues.

As to quaternary structure, component of the mitochondrial ribosome small subunit.

The protein resides in the mitochondrion. Required for karyogamy during female gametophyte development, when the two polar nuclei fuse to form the diploid central cell nucleus. The protein is Small ribosomal subunit protein mS77 (rPPR2) of Arabidopsis thaliana (Mouse-ear cress).